Consider the following 461-residue polypeptide: O-methyltransferase CTB2 (461 aa).

Asp288 contributes to the S-adenosyl-L-methionine binding site. Catalysis depends on His339, which acts as the Proton acceptor.

The protein belongs to the class I-like SAM-binding methyltransferase superfamily. Cation-independent O-methyltransferase family. COMT subfamily.

Its pathway is mycotoxin biosynthesis. Its function is as follows. O-methyltransferase; part of the gene cluster that mediates the biosynthesis of cercosporin, a light-activated, non-host-selective toxin. The perylenequinone chromophore of cercosporin absorbs light energy to attain an electronically-activated triplet state and produces active oxygen species such as the hydroxyl radical, superoxide, hydrogen peroxide or singlet oxygen upon reaction with oxygen molecules. These reactive oxygen species cause damage to various cellular components including lipids, proteins and nucleic acids. The first step of cercosporin biosynthesis is performed by the polyketide synthase CTB1 which catalyzes the formation of nor-toralactone. The starter unit acyltransferase (SAT) domain of CTB1 initiates polyketide extension by the selective utilization of acetyl-CoA, which is elongated to the heptaketide in the beta-ketoacyl synthase (KS) domain by successive condensations with six malonyl units introduced by the malonyl acyltransferase (MAT) domain. The product template (PT) domain catalyzes C4-C9 and C2-C11 aldol cyclizations and dehydrations to a trihydroxynaphthalene, which is thought to be delivered to the thioesterase (TE) domain for product release. The bifunctional enzyme CTB3 then methylates nor-toralactone to toralactone before conducting an unusual oxidative aromatic ring opening. The O-methyltransferase CTB2 further methylates the nascent OH-6 of the CBT3 product, blocking further oxidation at this site before the reductase CTB6 reduces the 2-oxopropyl ketone at position C7, giving naphthalene. The FAD-dependent monooxygenase CTB5 in concert with the multicopper oxidase CTB12 are responsible for homodimerization of naphthalene with CTB7 installing the dioxepine moiety, finally producing cercosporin. The fasciclin domain-containing protein CTB11 might act with CTB5 and CTB12 whereas the roles of CTB9 and CTB10 have still to be elucidated. This chain is O-methyltransferase CTB2, found in Cercospora nicotianae (Barn spot disease fungus).